Here is a 279-residue protein sequence, read N- to C-terminus: Tryptophan 2,3-dioxygenase (279 aa).

Substrate is bound by residues phenylalanine 48 to histidine 52, tyrosine 110, and arginine 114. Histidine 237 serves as a coordination point for heme. Position 251 (threonine 251) interacts with substrate.

Belongs to the tryptophan 2,3-dioxygenase family. In terms of assembly, homotetramer. Heme is required as a cofactor.

The enzyme catalyses L-tryptophan + O2 = N-formyl-L-kynurenine. It participates in amino-acid degradation; L-tryptophan degradation via kynurenine pathway; L-kynurenine from L-tryptophan: step 1/2. Functionally, heme-dependent dioxygenase that catalyzes the oxidative cleavage of the L-tryptophan (L-Trp) pyrrole ring and converts L-tryptophan to N-formyl-L-kynurenine. Catalyzes the oxidative cleavage of the indole moiety. This chain is Tryptophan 2,3-dioxygenase, found in Bradyrhizobium diazoefficiens (strain JCM 10833 / BCRC 13528 / IAM 13628 / NBRC 14792 / USDA 110).